A 426-amino-acid polypeptide reads, in one-letter code: Probable indole-3-pyruvate monooxygenase YUCCA8 (426 aa).

29–34 (GAGPSG) lines the FAD pocket. 199–204 (GCGNSG) provides a ligand contact to NADP(+).

Belongs to the FMO family. FAD serves as cofactor. As to expression, expressed in root tips and in hydathodes. Expressed in root vasculature and quiescent center, but not in the meristematic zone of the root tip.

It catalyses the reaction indole-3-pyruvate + NADPH + O2 + H(+) = (indol-3-yl)acetate + CO2 + NADP(+) + H2O. Its pathway is plant hormone metabolism; auxin biosynthesis. In terms of biological role, involved in auxin biosynthesis. Belongs to the set of redundant YUCCA genes probably responsible for auxin biosynthesis in roots. The sequence is that of Probable indole-3-pyruvate monooxygenase YUCCA8 (YUC8) from Arabidopsis thaliana (Mouse-ear cress).